A 314-amino-acid chain; its full sequence is tRNA dimethylallyltransferase (314 aa).

Residue 9–16 (GPTAVGKT) coordinates ATP. Residue 11–16 (TAVGKT) participates in substrate binding. The segment at 34 to 37 (DSVQ) is interaction with substrate tRNA.

The protein belongs to the IPP transferase family. Monomer. It depends on Mg(2+) as a cofactor.

It carries out the reaction adenosine(37) in tRNA + dimethylallyl diphosphate = N(6)-dimethylallyladenosine(37) in tRNA + diphosphate. In terms of biological role, catalyzes the transfer of a dimethylallyl group onto the adenine at position 37 in tRNAs that read codons beginning with uridine, leading to the formation of N6-(dimethylallyl)adenosine (i(6)A). This Desulfitobacterium hafniense (strain DSM 10664 / DCB-2) protein is tRNA dimethylallyltransferase.